We begin with the raw amino-acid sequence, 480 residues long: Nuclear receptor subfamily 6 group A member 1 (480 aa).

Residues 1-32 form a disordered region; sequence MERDEPPPSGGGGGGGSAGFLEPPAALPPPPR. Positions 57–132 form a DNA-binding region, nuclear receptor; it reads QRTCLICGDR…MGMNRKAIRE (76 aa). 8 residues coordinate Zn(2+): Cys60, Cys63, Cys77, Cys80, Cys96, Cys102, Cys112, and Cys115. 2 NR C4-type zinc fingers span residues 60 to 80 and 96 to 120; these read CLIC…CEGC and CSRD…LLKC. Disordered stretches follow at residues 131–150 and 162–199; these read REDG…QISE and FEEE…LSSS. The span at 165–177 shows a compositional bias: basic and acidic residues; the sequence is EANHWSNHGDSDH. The segment at 172–253 is sufficient for interaction with UIMC1; it reads HGDSDHSSPG…RSLDPQSYSL (82 aa). The span at 187–199 shows a compositional bias: low complexity; that stretch reads SNQPSPGSTLSSS. Residues 249 to 480 form the NR LBD domain; that stretch reads QSYSLIHQLL…HSCKTSVGKE (232 aa).

Belongs to the nuclear hormone receptor family. NR6 subfamily. As to quaternary structure, homodimer. Interacts with UIMC1. In terms of tissue distribution, shows highest expression in the germ cells of the adult testis.

Its subcellular location is the nucleus. In terms of biological role, orphan nuclear receptor that binds to a response element containing the sequence 5'-TCAAGGTCA-3'. Acts as a regulator of embryonic stem cell pluripotency by mediating repression of POU5F1/OCT4: binds to the DR0 element within the POU5F1/OCT4 promoter and inhibits POU5F1/OCT4 expression during embryonic stem cell differentiation. Involved in the regulation of gene expression in germ cell development during gametogenesis. The polypeptide is Nuclear receptor subfamily 6 group A member 1 (NR6A1) (Homo sapiens (Human)).